A 434-amino-acid chain; its full sequence is Methylenetetrahydrofolate--tRNA-(uracil-5-)-methyltransferase TrmFO (434 aa).

10-15 (GAGLAG) contributes to the FAD binding site.

This sequence belongs to the MnmG family. TrmFO subfamily. The cofactor is FAD.

The protein resides in the cytoplasm. It carries out the reaction uridine(54) in tRNA + (6R)-5,10-methylene-5,6,7,8-tetrahydrofolate + NADH + H(+) = 5-methyluridine(54) in tRNA + (6S)-5,6,7,8-tetrahydrofolate + NAD(+). The catalysed reaction is uridine(54) in tRNA + (6R)-5,10-methylene-5,6,7,8-tetrahydrofolate + NADPH + H(+) = 5-methyluridine(54) in tRNA + (6S)-5,6,7,8-tetrahydrofolate + NADP(+). Catalyzes the folate-dependent formation of 5-methyl-uridine at position 54 (M-5-U54) in all tRNAs. The protein is Methylenetetrahydrofolate--tRNA-(uracil-5-)-methyltransferase TrmFO of Bacillus cytotoxicus (strain DSM 22905 / CIP 110041 / 391-98 / NVH 391-98).